We begin with the raw amino-acid sequence, 211 residues long: Nucleoside diphosphate kinase homolog 5 (211 aa).

Residues 13 to 145 (EKTLALIKPD…EREIRFMFPA (133 aa)) form an NDK region.

This sequence belongs to the NDK family. Component of the axonemal radial spoke complex 1 (RS1), at least composed of spoke head proteins RSPH1, RSPH3, RSPH9 and the cilia-specific component RSPH4A or sperm-specific component RSPH6A, spoke stalk proteins RSPH14, DNAJB13, DYDC1, ROPN1L and NME5, and the anchor protein IQUB. Interacts with IQUB. Expressed in the trachea, ependymal cells and oviduct (at protein level). Expressed predominantly in germ cells of the testis. Not expressed in testicular somatic cells.

The protein localises to the cell projection. It is found in the cilium. It localises to the cytoplasm. Its subcellular location is the cytoskeleton. The protein resides in the flagellum axoneme. Its function is as follows. Functions as part of axonemal radial spoke complexes that play an important part in the motility of sperm and cilia. Does not seem to have nucleoside diphosphate kinase (NDPK) activity. Confers protection from cell death by BAX and alters the cellular levels of several antioxidant enzymes including GPX5. May play a role in spermiogenesis by increasing the ability of late-stage spermatids to eliminate reactive oxygen species. This chain is Nucleoside diphosphate kinase homolog 5 (Nme5), found in Mus musculus (Mouse).